The primary structure comprises 485 residues: D-alanine--D-alanyl carrier protein ligase (485 aa).

144-145 (TS) lines the ATP pocket. A D-alanine-binding site is contributed by aspartate 189. An ATP-binding site is contributed by 284-289 (NTYGPT). Residue valine 293 coordinates D-alanine. ATP-binding residues include aspartate 365 and lysine 473. Lysine 473 contacts D-alanine.

Belongs to the ATP-dependent AMP-binding enzyme family. DltA subfamily.

Its subcellular location is the cytoplasm. The enzyme catalyses holo-[D-alanyl-carrier protein] + D-alanine + ATP = D-alanyl-[D-alanyl-carrier protein] + AMP + diphosphate. It participates in cell wall biogenesis; lipoteichoic acid biosynthesis. In terms of biological role, catalyzes the first step in the D-alanylation of lipoteichoic acid (LTA), the activation of D-alanine and its transfer onto the D-alanyl carrier protein (Dcp) DltC. In an ATP-dependent two-step reaction, forms a high energy D-alanyl-AMP intermediate, followed by transfer of the D-alanyl residue as a thiol ester to the phosphopantheinyl prosthetic group of the Dcp. D-alanylation of LTA plays an important role in modulating the properties of the cell wall in Gram-positive bacteria, influencing the net charge of the cell wall. This chain is D-alanine--D-alanyl carrier protein ligase, found in Staphylococcus aureus (strain USA300).